A 211-amino-acid chain; its full sequence is MTPWLGLVVLLSCWSLGHWGTEACTCSPSHPQDAFCNSDIVIRAKVVGKKLVKEGPFGTLVYTIKQMKMYRGFSKMPHVQYIHTEASESLCGLKLEVNKYQYLLTGRVYEGKMYTGLCNFVERWDHLTLSQRKGLNYRYHLGCNCKIKSCYYLPCFVTSKKECLWTDMLSNFGYPGYQSKHYACIRQKGGYCSWYRGWAPPDKSISNATDP.

Residues 1–23 form the signal peptide; it reads MTPWLGLVVLLSCWSLGHWGTEA. C24 contacts Zn(2+). Involved in metalloproteinase-binding stretches follow at residues 24 to 27 and 88 to 89; these read CTCS and ES. 6 disulfides stabilise this stretch: C24–C91, C26–C118, C36–C143, C145–C192, C150–C155, and C163–C184. The NTR domain occupies 24–143; the sequence is CTCSPSHPQD…GLNYRYHLGC (120 aa). A mediates interaction with EFEMP1 region spans residues 105–188; that stretch reads TGRVYEGKMY…SKHYACIRQK (84 aa).

The protein belongs to the protease inhibitor I35 (TIMP) family. As to quaternary structure, interacts with EFEMP1. Interacts with KDR.

Its subcellular location is the secreted. The protein resides in the extracellular space. It is found in the extracellular matrix. Its function is as follows. Mediates a variety of processes including matrix regulation and turnover, inflammation, and angiogenesis, through reversible inhibition of zinc protease superfamily enzymes, primarily matrix metalloproteinases (MMPs). Regulates extracellular matrix (ECM) remodeling through inhibition of matrix metalloproteinases (MMP) including MMP-1, MMP-2, MMP-3, MMP-7, MMP-9, MMP-13, MMP-14 and MMP-15. Additionally, modulates the processing of amyloid precursor protein (APP) and apolipoprotein E receptor ApoER2 by inhibiting two alpha-secretases ADAM10 and ADAM17. Functions as a tumor suppressor and a potent inhibitor of angiogenesis. Exerts its anti-angiogenic effect by directly interacting with vascular endothelial growth factor (VEGF) receptor-2/KDR, preventing its binding to the VEGFA ligand. Selectively induces apoptosis in angiogenic endothelial cells through a caspase-independent cell death pathway. Mechanistically, inhibits matrix-induced focal adhesion kinase PTK2 tyrosine phosphorylation and association with paxillin/PXN and disrupts the incorporation of ITGB3, PTK2 and PXN into focal adhesion contacts on the matrix. This chain is Metalloproteinase inhibitor 3 (Timp3), found in Rattus norvegicus (Rat).